The chain runs to 269 residues: Undecaprenyl-diphosphatase (269 aa).

8 helical membrane-spanning segments follow: residues 3 to 23 (LLIK…LPIS), 41 to 61 (FATM…VFYY), 78 to 98 (GFNL…IGLL), 107 to 127 (LFSP…MIVI), 148 to 167 (SLLI…SRSA), 184 to 204 (AEFS…LSLL), 213 to 233 (LEWQ…LFVV), and 248 to 268 (FAYY…EKIV).

The protein belongs to the UppP family.

It localises to the cell membrane. It carries out the reaction di-trans,octa-cis-undecaprenyl diphosphate + H2O = di-trans,octa-cis-undecaprenyl phosphate + phosphate + H(+). Functionally, catalyzes the dephosphorylation of undecaprenyl diphosphate (UPP). Confers resistance to bacitracin. The polypeptide is Undecaprenyl-diphosphatase (Thermoanaerobacter sp. (strain X514)).